The sequence spans 44 residues: Conotoxin Rg11a (44 aa).

Disulfide bonds link Cys-1/Cys-15, Cys-8/Cys-22, Cys-14/Cys-30, and Cys-21/Cys-36.

Expressed by the venom duct.

It is found in the secreted. In terms of biological role, neurotoxin. Elicits hypersensibility when injected intracranially in mice. May act via potassium channel currents. The protein is Conotoxin Rg11a of Conus regius (Crown cone).